The primary structure comprises 342 residues: Probable long-chain-alcohol O-fatty-acyltransferase 3 (342 aa).

8 consecutive transmembrane segments (helical) span residues isoleucine 9–isoleucine 29, leucine 36–valine 56, phenylalanine 58–serine 78, isoleucine 115–glutamate 135, isoleucine 153–glycine 173, methionine 227–phenylalanine 247, threonine 255–valine 275, and valine 297–isoleucine 317.

It belongs to the wax synthase family.

It localises to the membrane. The catalysed reaction is a long chain fatty alcohol + a fatty acyl-CoA = a wax ester + CoA. Catalyzes the final step in the synthesis of long-chain linear esters (waxes). This Arabidopsis thaliana (Mouse-ear cress) protein is Probable long-chain-alcohol O-fatty-acyltransferase 3 (AT3).